We begin with the raw amino-acid sequence, 256 residues long: tRNA pseudouridine synthase A (256 aa).

The active-site Nucleophile is D49. Substrate is bound at residue Y104.

It belongs to the tRNA pseudouridine synthase TruA family.

It catalyses the reaction uridine(38/39/40) in tRNA = pseudouridine(38/39/40) in tRNA. Formation of pseudouridine at positions 38, 39 and 40 in the anticodon stem and loop of transfer RNAs. The chain is tRNA pseudouridine synthase A from Methanopyrus kandleri (strain AV19 / DSM 6324 / JCM 9639 / NBRC 100938).